The sequence spans 641 residues: Protein BCAP (641 aa).

Coiled coils occupy residues histidine 83 to aspartate 144, glutamate 191 to glutamate 270, glutamine 299 to glutamine 375, and phenylalanine 487 to alanine 599.

It belongs to the ODF2 family.

It localises to the cytoplasm. The protein localises to the cytoskeleton. Its subcellular location is the microtubule organizing center. The protein resides in the centrosome. It is found in the centriole. It localises to the centriolar satellite. The protein localises to the cilium basal body. Functionally, acts as a suppressor of ciliogenesis, specifically, the initiation of ciliogenesis. This Xenopus laevis (African clawed frog) protein is Protein BCAP (odf2l).